Here is a 359-residue protein sequence, read N- to C-terminus: Mitochondrial glutathione transporter SLC25A39 (359 aa).

Residues 1–18 (MGDRPAVRISAAITPVQQ) are Mitochondrial intermembrane-facing. Solcar repeat units lie at residues 13 to 149 (ITPV…LRDF), 157 to 241 (HGDH…VKAQ), and 251 to 346 (ASFT…GKTF). Residues 19–39 (MLASGTGAVLTSLFVTPLDVV) form a helical membrane-spanning segment. Topologically, residues 40-119 (KIRLQAQQTP…VKITHNEGLR (80 aa)) are mitochondrial matrix. Cys72, Cys76, Cys86, and Cys92 together coordinate [2Fe-2S] cluster. Residues 120–140 (SLWSGLPPTLVMAVPATVIYF) traverse the membrane as a helical segment. Over 141–162 (TCYDQLRDFLCYSMGYHGDHIP) the chain is Mitochondrial intermembrane. A helical transmembrane segment spans residues 163–183 (LIAGGLARLGAVSVISPLELV). The Mitochondrial matrix segment spans residues 184–212 (RTKMQSRRLQYSELMVCIRSSVAQDGWLS). A helical transmembrane segment spans residues 213 to 233 (LWRGWGPTVLRDVPFSALYWF). At 234-253 (NYELVKAQLCEHYRTPQASF) the chain is on the mitochondrial intermembrane side. Residues 254-274 (TISFTAGAVSGAIAAVLTLPF) form a helical membrane-spanning segment. Residues 275–316 (DVVKTRRQIQLGEMEALGAVSMKKPSSTWNMMRNIWIDMGYK) lie on the Mitochondrial matrix side of the membrane. The chain crosses the membrane as a helical span at residues 317–337 (GLFAGFLPRVIKVAPACAVMI). Residues 338-359 (STYEFGKTFFQERNLHQARCGL) are Mitochondrial intermembrane-facing.

The protein belongs to the mitochondrial carrier (TC 2.A.29) family. Post-translationally, cleaved and degraded by AFG3L2; degradation by AFG3L2 is regulated by the ability of SLC25A39 to bind iron-sulfur. In absence of mitochondrial glutathione, SLC25A39 binds iron-sulfur, preventing cleavage and degradation by AFG3L2. The presence of mitochondrial glutathione prevents iron-sulfur-binding to SLC25A39, promoting cleavage and degradation by AFG3L2.

The protein localises to the mitochondrion inner membrane. It carries out the reaction glutathione(in) = glutathione(out). The activity of SLC25A39 is regulated by levels of mitochondrial glutathione via its ability to bind [2Fe-2S] iron-sulfur cluster. Upon physiological levels of mitochondrial glutathione, glutathione prevents iron-sulfur-binding to SLC25A39 promoting cleavage and degradation by AFG3L2. Upon depletion of mitochondrial glutathione, SLC25A39 binds iron-sulfur, preventing cleavage and degradation by AFG3L2. Its function is as follows. Mitochondrial transporter required for glutathione import into mitochondria. Glutathione, which plays key roles in oxidative metabolism, is produced exclusively in the cytosol and is imported in many organelles. Mitochondrial glutathione is required for the activity and stability of proteins containing iron-sulfur clusters, as well as erythropoiesis. Involved in the early steps of heme biosynthesis. This chain is Mitochondrial glutathione transporter SLC25A39 (slc25a39), found in Danio rerio (Zebrafish).